The chain runs to 532 residues: Apoptosis-inducing factor 1, mitochondrial (532 aa).

A mitochondrion-targeting transit peptide spans 1 to 26 (MIRNLTKLTKFTIGNRFYQSSSKGRF). The disordered stretch occupies residues 63–84 (STPSIDVKEKKSQPPKTKEDYQ). Residues 98-440 (YVIIGGGTAA…APYTYQPFFW (343 aa)) form an FAD-dependent oxidoreductase region. Residues 102-106 (GGGTA), 128-129 (KE), arginine 136, and lysine 141 contribute to the FAD site. An NAD(+)-binding site is contributed by tryptophan 160. Residues valine 188 and arginine 236 each coordinate FAD. NAD(+)-binding positions include 260-263 (GGFL), glutamate 288, and glycine 353. Aspartate 392 is an FAD binding site. The Nuclear localization signal signature appears at 400–406 (SLGVRRR). NAD(+) is bound by residues 408-409 (EH), tryptophan 440, and glutamate 450. FAD is bound by residues 409 to 410 (HH) and tryptophan 440.

The protein belongs to the FAD-dependent oxidoreductase family. The cofactor is FAD.

It localises to the mitochondrion. The protein resides in the cytoplasm. The protein localises to the nucleus. The catalysed reaction is A + NADH + H(+) = AH2 + NAD(+). In terms of biological role, probable NADH oxidoreductase that acts as a caspase-independent mitochondrial effector of apoptotic cell death. This Dictyostelium discoideum (Social amoeba) protein is Apoptosis-inducing factor 1, mitochondrial (aif).